The chain runs to 329 residues: DNA-directed RNA polymerase subunit alpha (329 aa).

Positions 1 to 235 (MQGSVTEFLK…EQLDAFVDLR (235 aa)) are alpha N-terminal domain (alpha-NTD). An alpha C-terminal domain (alpha-CTD) region spans residues 249–329 (FDPILLRPVD…NWPPASIAED (81 aa)).

Belongs to the RNA polymerase alpha chain family. In terms of assembly, homodimer. The RNAP catalytic core consists of 2 alpha, 1 beta, 1 beta' and 1 omega subunit. When a sigma factor is associated with the core the holoenzyme is formed, which can initiate transcription.

It catalyses the reaction RNA(n) + a ribonucleoside 5'-triphosphate = RNA(n+1) + diphosphate. In terms of biological role, DNA-dependent RNA polymerase catalyzes the transcription of DNA into RNA using the four ribonucleoside triphosphates as substrates. This is DNA-directed RNA polymerase subunit alpha from Aliivibrio salmonicida (strain LFI1238) (Vibrio salmonicida (strain LFI1238)).